Reading from the N-terminus, the 410-residue chain is LIMR family protein SELMODRAFT_432208 (410 aa).

A run of 5 helical transmembrane segments spans residues 30 to 50 (LWWAVYIIDTVLVIPFAIFFY), 67 to 87 (LWVVILLTVFCLLLGILYAVI), 129 to 149 (VTLMVSLFFYIFPFFIDLTTL), 156 to 176 (ICLDLWLKLSVTYVITLNTII), and 179 to 199 (ILFMMFGGVGMATLPLSLIFA). Positions 245–274 (RMFRKNVKKVQQELVFLEDDVEALNEAFPQ) form a coiled coil. 2 consecutive transmembrane segments (helical) span residues 288 to 308 (LVFGIVGLALSIIWLLHIIVF) and 330 to 350 (GGLLGTTTFAIFCYYLVMSVI). The span at 389–400 (PSSAMDSSSWSA) shows a compositional bias: low complexity. The interval 389-410 (PSSAMDSSSWSADRPCRPWPWP) is disordered.

The protein belongs to the LIMR family.

It localises to the membrane. The polypeptide is LIMR family protein SELMODRAFT_432208 (Selaginella moellendorffii (Spikemoss)).